The primary structure comprises 394 residues: MIEVVAELSRGPVFLAGEALECVVTVTNPLPPTATSASSEALAWASAQIHCQFHASESRVALPPPDSSQPDVQPESQTVLLPHRGERGQCILSTPPKILFCDLRLDPGESKSYSYSEVLPVEGPPSFRGQSVKYVYKLTIGCQRVNSPITLLRVPLRVLVLTGLQDVRFPQDEAVAPSSPFLEEDEGGKKDSWLTELAGERLMAATSCRSLHLYNISDGRGKVGTFGIFKSVYRLGEDVVGTLNLGEGTVACLQYSVSLQTEERVQPEYQRRRGAGGAPSVSHITHARHQESCLHTTRTSFSLPIPLSSTPGFCTAIVSLKWRLHFEFVTSREPGLVLLPPVEQPEPATWTGPEQVPVDTFSWDLPIKPEASHTFLSVQPASYCYSVRSHIRAI.

It belongs to the RGP1 family. As to quaternary structure, forms a complex with RIC1; the interaction enhances RAB6A GTPase activity. Interacts with RIC1. Interacts with RAB6A; the interaction is direct with a preference for RAB6A-GDP. Interacts with RAB33B.

The protein localises to the cytoplasm. It is found in the cytosol. The protein resides in the membrane. Functionally, the RIC1-RGP1 complex acts as a guanine nucleotide exchange factor (GEF), which activates RAB6A by exchanging bound GDP for free GTP and may thereby required for efficient fusion of endosome-derived vesicles with the Golgi compartment. The RIC1-RGP1 complex participates in the recycling of mannose-6-phosphate receptors. This is RAB6A-GEF complex partner protein 2 from Bos taurus (Bovine).